The sequence spans 89 residues: Mitochondrial import inner membrane translocase subunit Tim9 (89 aa).

Position 2 is an N-acetylalanine (Ala-2). Positions 28-52 (CFLDCVKDFTTREVKPEETTCSEHC) match the Twin CX3C motif motif. 2 disulfides stabilise this stretch: Cys-28/Cys-52 and Cys-32/Cys-48.

It belongs to the small Tim family. Heterohexamer; composed of 3 copies of TIMM9 and 3 copies of TIMM10/TIM10A, named soluble 70 kDa complex. The complex forms a 6-bladed alpha-propeller structure and associates with the TIMM22 component of the TIM22 complex. Interacts with multi-pass transmembrane proteins in transit. Also forms a complex composed of TIMM9, TIMM10/TIM10A and FXC1/TIM10B. In terms of tissue distribution, ubiquitous, with highest expression in heart, kidney, liver and skeletal muscle.

It is found in the mitochondrion inner membrane. Its function is as follows. Mitochondrial intermembrane chaperone that participates in the import and insertion of multi-pass transmembrane proteins into the mitochondrial inner membrane. May also be required for the transfer of beta-barrel precursors from the TOM complex to the sorting and assembly machinery (SAM complex) of the outer membrane. Acts as a chaperone-like protein that protects the hydrophobic precursors from aggregation and guide them through the mitochondrial intermembrane space. This Homo sapiens (Human) protein is Mitochondrial import inner membrane translocase subunit Tim9 (TIMM9).